Here is a 481-residue protein sequence, read N- to C-terminus: Chromosomal replication initiator protein DnaA (481 aa).

The tract at residues 1–71 is domain I, interacts with DnaA modulators; the sequence is MTDLSAFWPQ…ETFAEDILGR (71 aa). The interval 71 to 143 is domain II; it reads RPVTIELRIG…PAIGGGHEST (73 aa). A compositionally biased stretch (low complexity) spans 86 to 96; the sequence is ASAPAAASPRS. Residues 86–110 form a disordered region; it reads ASAPAAASPRSPGRPAPAPVAATPT. The tract at residues 144 to 361 is domain III, AAA+ region; it reads RLNPAFTFES…GALKRVVAYS (218 aa). 4 residues coordinate ATP: Gly-189, Gly-191, Lys-192, and Thr-193. The domain IV, binds dsDNA stretch occupies residues 362-481; sequence RFSNQPISLD…YAALQQMLRN (120 aa).

The protein belongs to the DnaA family. In terms of assembly, oligomerizes as a right-handed, spiral filament on DNA at oriC.

It is found in the cytoplasm. Functionally, plays an essential role in the initiation and regulation of chromosomal replication. ATP-DnaA binds to the origin of replication (oriC) to initiate formation of the DNA replication initiation complex once per cell cycle. Binds the DnaA box (a 9 base pair repeat at the origin) and separates the double-stranded (ds)DNA. Forms a right-handed helical filament on oriC DNA; dsDNA binds to the exterior of the filament while single-stranded (ss)DNA is stabiized in the filament's interior. The ATP-DnaA-oriC complex binds and stabilizes one strand of the AT-rich DNA unwinding element (DUE), permitting loading of DNA polymerase. After initiation quickly degrades to an ADP-DnaA complex that is not apt for DNA replication. Binds acidic phospholipids. This is Chromosomal replication initiator protein DnaA from Laribacter hongkongensis (strain HLHK9).